A 433-amino-acid chain; its full sequence is 3-phosphoshikimate 1-carboxyvinyltransferase (433 aa).

3 residues coordinate 3-phosphoshikimate: K21, S22, and R26. A phosphoenolpyruvate-binding site is contributed by K21. G96 and R124 together coordinate phosphoenolpyruvate. 3-phosphoshikimate contacts are provided by S167, S168, Q169, S195, D310, and K337. Q169 lines the phosphoenolpyruvate pocket. D310 (proton acceptor) is an active-site residue. 3 residues coordinate phosphoenolpyruvate: R341, R384, and K410.

This sequence belongs to the EPSP synthase family. Monomer.

The protein resides in the cytoplasm. The enzyme catalyses 3-phosphoshikimate + phosphoenolpyruvate = 5-O-(1-carboxyvinyl)-3-phosphoshikimate + phosphate. It participates in metabolic intermediate biosynthesis; chorismate biosynthesis; chorismate from D-erythrose 4-phosphate and phosphoenolpyruvate: step 6/7. Its function is as follows. Catalyzes the transfer of the enolpyruvyl moiety of phosphoenolpyruvate (PEP) to the 5-hydroxyl of shikimate-3-phosphate (S3P) to produce enolpyruvyl shikimate-3-phosphate and inorganic phosphate. This Clostridium botulinum (strain Eklund 17B / Type B) protein is 3-phosphoshikimate 1-carboxyvinyltransferase.